The chain runs to 276 residues: Glutamate racemase (276 aa).

Residues 9–10 (DS) and 41–42 (YG) contribute to the substrate site. C72 (proton donor/acceptor) is an active-site residue. Residue 73–74 (NT) coordinates substrate. Residue C183 is the Proton donor/acceptor of the active site. 184–185 (TH) contacts substrate.

The protein belongs to the aspartate/glutamate racemases family.

The catalysed reaction is L-glutamate = D-glutamate. It participates in cell wall biogenesis; peptidoglycan biosynthesis. Provides the (R)-glutamate required for cell wall biosynthesis. This chain is Glutamate racemase, found in Shouchella clausii (strain KSM-K16) (Alkalihalobacillus clausii).